Here is a 348-residue protein sequence, read N- to C-terminus: NADH-ubiquinone oxidoreductase chain 2 (348 aa).

The next 9 helical transmembrane spans lie at 13 to 33 (VGLG…WMGL), 60 to 80 (FLTQ…NAWM), 93 to 113 (IAST…PMHF), 149 to 169 (IDPL…GWGG), 178 to 197 (ILAY…IQYA), 202 to 219 (LIAL…FLTL), 246 to 266 (LVLL…KWLI), 274 to 294 (DLPI…YFYL), and 326 to 346 (LALF…ILML).

This sequence belongs to the complex I subunit 2 family.

It localises to the mitochondrion inner membrane. The catalysed reaction is a ubiquinone + NADH + 5 H(+)(in) = a ubiquinol + NAD(+) + 4 H(+)(out). Functionally, core subunit of the mitochondrial membrane respiratory chain NADH dehydrogenase (Complex I) that is believed to belong to the minimal assembly required for catalysis. Complex I functions in the transfer of electrons from NADH to the respiratory chain. The immediate electron acceptor for the enzyme is believed to be ubiquinone. The chain is NADH-ubiquinone oxidoreductase chain 2 (MT-ND2) from Cyprinus carpio (Common carp).